We begin with the raw amino-acid sequence, 251 residues long: Triosephosphate isomerase (251 aa).

Residue 10–12 (NWK) participates in substrate binding. Histidine 95 serves as the catalytic Electrophile. The active-site Proton acceptor is glutamate 167. Residues glycine 173, serine 213, and 234–235 (GG) contribute to the substrate site.

Belongs to the triosephosphate isomerase family. As to quaternary structure, homodimer.

It is found in the cytoplasm. The enzyme catalyses D-glyceraldehyde 3-phosphate = dihydroxyacetone phosphate. It participates in carbohydrate biosynthesis; gluconeogenesis. Its pathway is carbohydrate degradation; glycolysis; D-glyceraldehyde 3-phosphate from glycerone phosphate: step 1/1. Involved in the gluconeogenesis. Catalyzes stereospecifically the conversion of dihydroxyacetone phosphate (DHAP) to D-glyceraldehyde-3-phosphate (G3P). This is Triosephosphate isomerase from Acetivibrio thermocellus (strain ATCC 27405 / DSM 1237 / JCM 9322 / NBRC 103400 / NCIMB 10682 / NRRL B-4536 / VPI 7372) (Clostridium thermocellum).